Here is a 390-residue protein sequence, read N- to C-terminus: Flap endonuclease 1-1 (390 aa).

The interval methionine 1 to lysine 108 is N-domain. Aspartate 34 is a binding site for Mg(2+). Arginine 74 contacts DNA. Aspartate 90, glutamate 162, glutamate 164, aspartate 183, and aspartate 185 together coordinate Mg(2+). Residues glutamine 126 to phenylalanine 254 are I-domain. Glutamate 162 serves as a coordination point for DNA. DNA-binding residues include glycine 232 and aspartate 234. Aspartate 234 serves as a coordination point for Mg(2+). The interval phenylalanine 348–phenylalanine 356 is interaction with PCNA. Residues threonine 359–isoleucine 390 are disordered.

The protein belongs to the XPG/RAD2 endonuclease family. FEN1 subfamily. Interacts with PCNA. Three molecules of FEN1 bind to one PCNA trimer with each molecule binding to one PCNA monomer. PCNA stimulates the nuclease activity without altering cleavage specificity. Mg(2+) is required as a cofactor. Phosphorylated. Phosphorylation upon DNA damage induces relocalization to the nuclear plasma.

It is found in the nucleus. The protein resides in the nucleolus. Its subcellular location is the nucleoplasm. It localises to the mitochondrion. Functionally, structure-specific nuclease with 5'-flap endonuclease and 5'-3' exonuclease activities involved in DNA replication and repair. During DNA replication, cleaves the 5'-overhanging flap structure that is generated by displacement synthesis when DNA polymerase encounters the 5'-end of a downstream Okazaki fragment. It enters the flap from the 5'-end and then tracks to cleave the flap base, leaving a nick for ligation. Also involved in the long patch base excision repair (LP-BER) pathway, by cleaving within the apurinic/apyrimidinic (AP) site-terminated flap. Acts as a genome stabilization factor that prevents flaps from equilibrating into structures that lead to duplications and deletions. Also possesses 5'-3' exonuclease activity on nicked or gapped double-stranded DNA, and exhibits RNase H activity. Also involved in replication and repair of rDNA and in repairing mitochondrial DNA. This Paramecium tetraurelia protein is Flap endonuclease 1-1.